Here is a 201-residue protein sequence, read N- to C-terminus: Potassium-transporting ATPase KdpC subunit (201 aa).

The chain crosses the membrane as a helical span at residues 10 to 30; it reads VLLVALTAVTGLAYPLAVTGI.

The protein belongs to the KdpC family. In terms of assembly, the system is composed of three essential subunits: KdpA, KdpB and KdpC.

The protein localises to the cell inner membrane. Functionally, part of the high-affinity ATP-driven potassium transport (or Kdp) system, which catalyzes the hydrolysis of ATP coupled with the electrogenic transport of potassium into the cytoplasm. This subunit acts as a catalytic chaperone that increases the ATP-binding affinity of the ATP-hydrolyzing subunit KdpB by the formation of a transient KdpB/KdpC/ATP ternary complex. This chain is Potassium-transporting ATPase KdpC subunit, found in Methylorubrum extorquens (strain PA1) (Methylobacterium extorquens).